A 428-amino-acid chain; its full sequence is Enolase (428 aa).

Residue Q167 coordinates (2R)-2-phosphoglycerate. The active-site Proton donor is the E209. The Mg(2+) site is built by D246, E288, and D315. Residues K340, R369, S370, and K391 each coordinate (2R)-2-phosphoglycerate. The Proton acceptor role is filled by K340.

The protein belongs to the enolase family. Component of the RNA degradosome, a multiprotein complex involved in RNA processing and mRNA degradation. Mg(2+) serves as cofactor.

The protein localises to the cytoplasm. It is found in the secreted. The protein resides in the cell surface. It carries out the reaction (2R)-2-phosphoglycerate = phosphoenolpyruvate + H2O. The protein operates within carbohydrate degradation; glycolysis; pyruvate from D-glyceraldehyde 3-phosphate: step 4/5. Catalyzes the reversible conversion of 2-phosphoglycerate (2-PG) into phosphoenolpyruvate (PEP). It is essential for the degradation of carbohydrates via glycolysis. The sequence is that of Enolase from Pseudomonas savastanoi pv. phaseolicola (strain 1448A / Race 6) (Pseudomonas syringae pv. phaseolicola (strain 1448A / Race 6)).